The following is an 89-amino-acid chain: Large ribosomal subunit protein bL27 (89 aa).

The disordered stretch occupies residues 1–26 (MATKKAGGSSKNGRDSAGRRLGLKKS).

It belongs to the bacterial ribosomal protein bL27 family.

This chain is Large ribosomal subunit protein bL27, found in Orientia tsutsugamushi (strain Ikeda) (Rickettsia tsutsugamushi).